Here is a 276-residue protein sequence, read N- to C-terminus: Elongation factor Ts (276 aa).

The segment at 76–79 (TDFV) is involved in Mg(2+) ion dislocation from EF-Tu.

Belongs to the EF-Ts family.

It localises to the cytoplasm. Functionally, associates with the EF-Tu.GDP complex and induces the exchange of GDP to GTP. It remains bound to the aminoacyl-tRNA.EF-Tu.GTP complex up to the GTP hydrolysis stage on the ribosome. The protein is Elongation factor Ts of Mycobacterium leprae (strain Br4923).